Here is a 140-residue protein sequence, read N- to C-terminus: Lymphocyte antigen 6H (140 aa).

Positions 1-25 (MLPAAMKGLGLALLAVLLCSAPAHG) are cleaved as a signal peptide. The UPAR/Ly6 domain occupies 26–91 (LWCQDCTLTT…RHFFSDYLMG (66 aa)). 4 cysteine pairs are disulfide-bonded: C28–C52, C31–C40, C45–C73, and C77–C104. N36 is a glycosylation site (N-linked (GlcNAc...) asparagine). The GPI-anchor amidated glycine moiety is linked to residue G115. Positions 116–140 (AGHSPWALAGGLLLSLGPALLWAGP) are cleaved as a propeptide — removed in mature form.

As to quaternary structure, interacts with CHRNA4 and CHRNA7.

It localises to the cell membrane. Its function is as follows. Believed to act as a modulator of nicotinic acetylcholine receptors (nAChRs) activity. In vitro inhibits alpha-3:beta-4-containing nAChRs maximum response. May play a role in the intracellular trafficking of alpha-7-containing nAChRs and may inhibit their expression at the cell surface. Seems to inhibit alpha-7/CHRNA7 signaling in hippocampal neurons. This Macaca fascicularis (Crab-eating macaque) protein is Lymphocyte antigen 6H (LY6H).